The following is a 195-amino-acid chain: Transcriptional regulator GfcR (195 aa).

This sequence belongs to the purine/pyrimidine phosphoribosyltransferase family. GfcR subfamily.

The sequence is that of Transcriptional regulator GfcR from Archaeoglobus fulgidus (strain ATCC 49558 / DSM 4304 / JCM 9628 / NBRC 100126 / VC-16).